The chain runs to 179 residues: Segregation and condensation protein B (179 aa).

Belongs to the ScpB family. Homodimer. Homodimerization may be required to stabilize the binding of ScpA to the Smc head domains. Component of a cohesin-like complex composed of ScpA, ScpB and the Smc homodimer, in which ScpA and ScpB bind to the head domain of Smc. The presence of the three proteins is required for the association of the complex with DNA.

The protein resides in the cytoplasm. Functionally, participates in chromosomal partition during cell division. May act via the formation of a condensin-like complex containing Smc and ScpA that pull DNA away from mid-cell into both cell halves. This Staphylococcus haemolyticus (strain JCSC1435) protein is Segregation and condensation protein B.